We begin with the raw amino-acid sequence, 197 residues long: Dephospho-CoA kinase (197 aa).

The DPCK domain occupies 5-197 (RLGLTGSIGM…IAHIRETADA (193 aa)). 13 to 18 (GMGKST) lines the ATP pocket.

It belongs to the CoaE family.

It localises to the cytoplasm. The catalysed reaction is 3'-dephospho-CoA + ATP = ADP + CoA + H(+). It functions in the pathway cofactor biosynthesis; coenzyme A biosynthesis; CoA from (R)-pantothenate: step 5/5. In terms of biological role, catalyzes the phosphorylation of the 3'-hydroxyl group of dephosphocoenzyme A to form coenzyme A. This is Dephospho-CoA kinase from Cereibacter sphaeroides (strain ATCC 17023 / DSM 158 / JCM 6121 / CCUG 31486 / LMG 2827 / NBRC 12203 / NCIMB 8253 / ATH 2.4.1.) (Rhodobacter sphaeroides).